Reading from the N-terminus, the 401-residue chain is 8-amino-7-oxononanoate synthase (401 aa).

Residue Arg-24 participates in substrate binding. 111-112 is a pyridoxal 5'-phosphate binding site; that stretch reads GF. His-137 is a binding site for substrate. Residues Ser-183, His-211, and Thr-240 each contribute to the pyridoxal 5'-phosphate site. At Lys-243 the chain carries N6-(pyridoxal phosphate)lysine. Thr-357 lines the substrate pocket.

This sequence belongs to the class-II pyridoxal-phosphate-dependent aminotransferase family. BioF subfamily. Homodimer. It depends on pyridoxal 5'-phosphate as a cofactor.

The catalysed reaction is 6-carboxyhexanoyl-[ACP] + L-alanine + H(+) = (8S)-8-amino-7-oxononanoate + holo-[ACP] + CO2. Its pathway is cofactor biosynthesis; biotin biosynthesis. Catalyzes the decarboxylative condensation of pimeloyl-[acyl-carrier protein] and L-alanine to produce 8-amino-7-oxononanoate (AON), [acyl-carrier protein], and carbon dioxide. In Xanthomonas axonopodis pv. citri (strain 306), this protein is 8-amino-7-oxononanoate synthase.